A 326-amino-acid chain; its full sequence is Aquaporin-3 (326 aa).

Transmembrane regions (helical) follow at residues 24–44 (LAEF…IITA) and 64–84 (LAFG…GISG). The NPA 1 motif lies at 88–90 (NPA). The helical transmembrane segment at 107–127 (LVYIFMQYMGAFFAASILYAV) threads the bilayer. N-linked (GlcNAc...) asparagine glycosylation occurs at N146. The next 2 membrane-spanning stretches (helical) occupy residues 166-186 (IFDA…IIDP) and 196-216 (IPLY…YNAG). Residues 220–222 (NPA) carry the NPA 2 motif. A helical transmembrane segment spans residues 247 to 267 (LWWLVPVIGPHVGGLLGGVTY). The N-linked (GlcNAc...) asparagine glycan is linked to N294.

The protein belongs to the MIP/aquaporin (TC 1.A.8) family.

The protein localises to the cell membrane. In terms of biological role, aquaglyceroporin that may modulate the water content and osmolytes during anhydrobiosis. The protein is Aquaporin-3 of Milnesium tardigradum (Water bear).